The sequence spans 336 residues: Tetraacyldisaccharide 4'-kinase (336 aa).

60 to 67 (TVGGTGKT) contacts ATP.

It belongs to the LpxK family.

The catalysed reaction is a lipid A disaccharide + ATP = a lipid IVA + ADP + H(+). It participates in glycolipid biosynthesis; lipid IV(A) biosynthesis; lipid IV(A) from (3R)-3-hydroxytetradecanoyl-[acyl-carrier-protein] and UDP-N-acetyl-alpha-D-glucosamine: step 6/6. In terms of biological role, transfers the gamma-phosphate of ATP to the 4'-position of a tetraacyldisaccharide 1-phosphate intermediate (termed DS-1-P) to form tetraacyldisaccharide 1,4'-bis-phosphate (lipid IVA). The sequence is that of Tetraacyldisaccharide 4'-kinase from Pseudomonas entomophila (strain L48).